Here is an 87-residue protein sequence, read N- to C-terminus: Small ribosomal subunit protein bS18 (87 aa).

Residues 1–19 (MSTRSRARKRSRVRSRTRR) show a composition bias toward basic residues. Residues 1 to 25 (MSTRSRARKRSRVRSRTRRKDPIFV) form a disordered region.

Belongs to the bacterial ribosomal protein bS18 family. Part of the 30S ribosomal subunit. Forms a tight heterodimer with protein bS6.

Its function is as follows. Binds as a heterodimer with protein bS6 to the central domain of the 16S rRNA, where it helps stabilize the platform of the 30S subunit. This is Small ribosomal subunit protein bS18 from Rhodopirellula baltica (strain DSM 10527 / NCIMB 13988 / SH1).